Reading from the N-terminus, the 662-residue chain is p-hydroxybenzoic acid efflux pump subunit AaeB (662 aa).

Transmembrane regions (helical) follow at residues 22 to 42 (FAFK…HLQL), 52 to 72 (AAIV…SGAI), 76 to 96 (GMLR…IIIA), 102 to 122 (VVML…SSLV), 129 to 149 (VFGL…GTPL), 161 to 181 (EIVL…PRSI), 378 to 398 (LFWL…IAVV), 415 to 435 (FLFG…FIMP), 439 to 459 (QSML…GLEV), 467 to 487 (LGAL…TFHI), and 491 to 511 (LDSA…ILLI).

The protein belongs to the aromatic acid exporter ArAE (TC 2.A.85) family.

Its subcellular location is the cell inner membrane. In terms of biological role, forms an efflux pump with AaeA. Could function as a metabolic relief valve, allowing to eliminate certain compounds when they accumulate to high levels in the cell. The protein is p-hydroxybenzoic acid efflux pump subunit AaeB of Pectobacterium carotovorum subsp. carotovorum (strain PC1).